The following is a 408-amino-acid chain: Argininosuccinate synthase (408 aa).

ATP-binding positions include 11–19 (AYSGGLDTS) and alanine 38. L-citrulline contacts are provided by tyrosine 91 and serine 96. Glycine 121 contacts ATP. Threonine 123, asparagine 127, and aspartate 128 together coordinate L-aspartate. Residue asparagine 127 coordinates L-citrulline. Positions 131, 182, 191, 267, and 279 each coordinate L-citrulline.

The protein belongs to the argininosuccinate synthase family. Type 1 subfamily. As to quaternary structure, homotetramer.

It localises to the cytoplasm. The catalysed reaction is L-citrulline + L-aspartate + ATP = 2-(N(omega)-L-arginino)succinate + AMP + diphosphate + H(+). The protein operates within amino-acid biosynthesis; L-arginine biosynthesis; L-arginine from L-ornithine and carbamoyl phosphate: step 2/3. This is Argininosuccinate synthase from Paracoccus denitrificans (strain Pd 1222).